The primary structure comprises 294 residues: 4-hydroxy-tetrahydrodipicolinate synthase (294 aa).

T44 is a pyruvate binding site. Y132 acts as the Proton donor/acceptor in catalysis. K161 functions as the Schiff-base intermediate with substrate in the catalytic mechanism. I203 lines the pyruvate pocket.

This sequence belongs to the DapA family. In terms of assembly, homotetramer; dimer of dimers.

The protein resides in the cytoplasm. The catalysed reaction is L-aspartate 4-semialdehyde + pyruvate = (2S,4S)-4-hydroxy-2,3,4,5-tetrahydrodipicolinate + H2O + H(+). It functions in the pathway amino-acid biosynthesis; L-lysine biosynthesis via DAP pathway; (S)-tetrahydrodipicolinate from L-aspartate: step 3/4. Catalyzes the condensation of (S)-aspartate-beta-semialdehyde [(S)-ASA] and pyruvate to 4-hydroxy-tetrahydrodipicolinate (HTPA). This chain is 4-hydroxy-tetrahydrodipicolinate synthase, found in Aquifex aeolicus (strain VF5).